The following is a 650-amino-acid chain: Acetyl-coenzyme A synthetase (650 aa).

CoA is bound by residues 191 to 194 (RGGR), T311, and N335. ATP-binding positions include 387–389 (GEP), 411–416 (DTWWQT), D501, and R516. S524 is a binding site for CoA. R527 provides a ligand contact to ATP. 3 residues coordinate Mg(2+): V538, H540, and I543. R585 lines the CoA pocket. Residue K610 is modified to N6-acetyllysine.

Belongs to the ATP-dependent AMP-binding enzyme family. It depends on Mg(2+) as a cofactor. Acetylated. Deacetylation by the SIR2-homolog deacetylase activates the enzyme.

The enzyme catalyses acetate + ATP + CoA = acetyl-CoA + AMP + diphosphate. Its function is as follows. Catalyzes the conversion of acetate into acetyl-CoA (AcCoA), an essential intermediate at the junction of anabolic and catabolic pathways. AcsA undergoes a two-step reaction. In the first half reaction, AcsA combines acetate with ATP to form acetyl-adenylate (AcAMP) intermediate. In the second half reaction, it can then transfer the acetyl group from AcAMP to the sulfhydryl group of CoA, forming the product AcCoA. The sequence is that of Acetyl-coenzyme A synthetase from Vibrio parahaemolyticus serotype O3:K6 (strain RIMD 2210633).